The primary structure comprises 659 residues: DNA ligase (659 aa).

Residues 32 to 36 (DQQYD), 81 to 82 (SL), and glutamate 110 each bind NAD(+). Residue lysine 112 is the N6-AMP-lysine intermediate of the active site. The NAD(+) site is built by arginine 133, glutamate 167, lysine 282, and lysine 306. Zn(2+)-binding residues include cysteine 399, cysteine 402, cysteine 415, and cysteine 420. One can recognise a BRCT domain in the interval 582–659 (IKNNIFKNKK…QEHEFEELIK (78 aa)).

It belongs to the NAD-dependent DNA ligase family. LigA subfamily. The cofactor is Mg(2+). Mn(2+) serves as cofactor.

The catalysed reaction is NAD(+) + (deoxyribonucleotide)n-3'-hydroxyl + 5'-phospho-(deoxyribonucleotide)m = (deoxyribonucleotide)n+m + AMP + beta-nicotinamide D-nucleotide.. DNA ligase that catalyzes the formation of phosphodiester linkages between 5'-phosphoryl and 3'-hydroxyl groups in double-stranded DNA using NAD as a coenzyme and as the energy source for the reaction. It is essential for DNA replication and repair of damaged DNA. The protein is DNA ligase of Phytoplasma mali (strain AT).